A 369-amino-acid chain; its full sequence is Coiled-coil domain-containing protein 149 (369 aa).

Residues 1-249 (MKENNNAEIL…AKYKQMAEAV (249 aa)) adopt a coiled-coil conformation.

It belongs to the CCDC149 family. Expressed in amphid and phasmid ciliated neurons, and also pharyngeal, touch receptor and motor neurons.

It localises to the cell projection. The protein resides in the cilium. This Caenorhabditis elegans protein is Coiled-coil domain-containing protein 149.